An 85-amino-acid polypeptide reads, in one-letter code: Large ribosomal subunit protein bL27 (85 aa).

Residues 1–20 form a disordered region; sequence MAHKKAGGSTRNGRDSESKR.

It belongs to the bacterial ribosomal protein bL27 family.

In Yersinia pseudotuberculosis serotype O:1b (strain IP 31758), this protein is Large ribosomal subunit protein bL27.